The following is a 208-amino-acid chain: MRLRQFIWLSMTQTRTADVSRSTKETEISVSVNLDGTGKADIETGIGFFDHMLDSLARHSLIDLKVRCKGDTHIDFHHSVEDTGIVIGQAIAKALGDFGGITRFGHAYIPMDETLTRASVDLCKRPYLIWKVEFRRDKIGEMDTELFKEFFHALAGNGGMCLHVENIYGENNHHIAESCFKATARALRTAITVDPRLGGKPASTKGSL.

The protein belongs to the imidazoleglycerol-phosphate dehydratase family.

It is found in the cytoplasm. It carries out the reaction D-erythro-1-(imidazol-4-yl)glycerol 3-phosphate = 3-(imidazol-4-yl)-2-oxopropyl phosphate + H2O. It participates in amino-acid biosynthesis; L-histidine biosynthesis; L-histidine from 5-phospho-alpha-D-ribose 1-diphosphate: step 6/9. This Hyphomonas neptunium (strain ATCC 15444) protein is Imidazoleglycerol-phosphate dehydratase.